We begin with the raw amino-acid sequence, 440 residues long: L-seryl-tRNA(Sec) selenium transferase (440 aa).

An N6-(pyridoxal phosphate)lysine modification is found at lysine 282.

This sequence belongs to the SelA family. The cofactor is pyridoxal 5'-phosphate.

It is found in the cytoplasm. It catalyses the reaction L-seryl-tRNA(Sec) + selenophosphate + H(+) = L-selenocysteinyl-tRNA(Sec) + phosphate. It participates in aminoacyl-tRNA biosynthesis; selenocysteinyl-tRNA(Sec) biosynthesis; selenocysteinyl-tRNA(Sec) from L-seryl-tRNA(Sec) (bacterial route): step 1/1. In terms of biological role, converts seryl-tRNA(Sec) to selenocysteinyl-tRNA(Sec) required for selenoprotein biosynthesis. This Campylobacter jejuni subsp. doylei (strain ATCC BAA-1458 / RM4099 / 269.97) protein is L-seryl-tRNA(Sec) selenium transferase.